Consider the following 213-residue polypeptide: ATP synthase peripheral stalk subunit OSCP, mitochondrial (213 aa).

The transit peptide at Met1–Pro23 directs the protein to the mitochondrion. The short motif at Ala5–Pro23 is the SIFI-degron element. Lys60, Lys70, and Lys73 each carry N6-acetyllysine. Lys90 bears the N6-succinyllysine mark. Residues Lys100 and Lys158 each carry the N6-acetyllysine; alternate modification. Residues Lys100 and Lys158 each carry the N6-succinyllysine; alternate modification. 2 positions are modified to N6-acetyllysine: Lys176 and Lys192. Lys199 is subject to N6-succinyllysine.

It belongs to the ATPase delta chain family. In terms of assembly, component of the ATP synthase complex composed at least of ATP5F1A/subunit alpha, ATP5F1B/subunit beta, ATP5MC1/subunit c (homooctomer), MT-ATP6/subunit a, MT-ATP8/subunit 8, ATP5ME/subunit e, ATP5MF/subunit f, ATP5MG/subunit g, ATP5MK/subunit k, ATP5MJ/subunit j, ATP5F1C/subunit gamma, ATP5F1D/subunit delta, ATP5F1E/subunit epsilon, ATP5PF/subunit F6, ATP5PB/subunit b, ATP5PD/subunit d, ATP5PO/subunit OSCP. ATP synthase complex consists of a soluble F(1) head domain (subunits alpha(3) and beta(3)) - the catalytic core - and a membrane F(0) domain - the membrane proton channel (subunits c, a, 8, e, f, g, k and j). These two domains are linked by a central stalk (subunits gamma, delta, and epsilon) rotating inside the F1 region and a stationary peripheral stalk (subunits F6, b, d, and OSCP). In terms of processing, in response to mitochondrial stress, the precursor protein is ubiquitinated by the SIFI complex in the cytoplasm before mitochondrial import, leading to its degradation. Within the SIFI complex, UBR4 initiates ubiquitin chain that are further elongated or branched by KCMF1. As to expression, expressed by the principal cells of the epididymis. Detected in flagella of epididymal sperm (at protein level).

The protein localises to the mitochondrion. It localises to the mitochondrion inner membrane. Its function is as follows. Subunit OSCP, of the mitochondrial membrane ATP synthase complex (F(1)F(0) ATP synthase or Complex V) that produces ATP from ADP in the presence of a proton gradient across the membrane which is generated by electron transport complexes of the respiratory chain. ATP synthase complex consist of a soluble F(1) head domain - the catalytic core - and a membrane F(1) domain - the membrane proton channel. These two domains are linked by a central stalk rotating inside the F(1) region and a stationary peripheral stalk. During catalysis, ATP synthesis in the catalytic domain of F(1) is coupled via a rotary mechanism of the central stalk subunits to proton translocation. In vivo, can only synthesize ATP although its ATP hydrolase activity can be activated artificially in vitro. Part of the complex F(0) domain. Part of the complex F(0) domain and the peripheric stalk, which acts as a stator to hold the catalytic alpha(3)beta(3) subcomplex and subunit a/ATP6 static relative to the rotary elements. This is ATP synthase peripheral stalk subunit OSCP, mitochondrial from Rattus norvegicus (Rat).